The primary structure comprises 364 residues: MTQPWGPQMLAGGQPPESHEDSTQASIFTYTNSNSTRGPFEGPNFHIAPRWVYHLTSAWMILVVIASVFTNGLVLVATMRFKKLRHPLNWILVNLAVADLAETVIASTISVVNQFYGYFVLGHPLCVVEGYTVSLCGITGLWSLAIISWERWLVVCKPFGNVRFDAKLAIAGIAFSWIWAAVWTAPPIFGWSRYWPYGLKTSCGPDVFSGTSYPGVQSYMMVLMVTCCIIPLSVIVLCYLQVWMAIRTVAKQQKESESTQKAEKEVTRMVVVMVFAYCLCWGPYTFFACFATAHPGYSFHPLVAAIPSYFAKSATIYNPIIYVFMNRQFRNCILQLFGKKVEDSSELSSASRTEASSVSSVSPA.

The tract at residues 1 to 23 (MTQPWGPQMLAGGQPPESHEDST) is disordered. Residues 1–52 (MTQPWGPQMLAGGQPPESHEDSTQASIFTYTNSNSTRGPFEGPNFHIAPRWV) are Extracellular-facing. The segment at 17 to 43 (ESHEDSTQASIFTYTNSNSTRGPFEGP) is required for 11-cis-retinal regeneration. Residue Asn34 is glycosylated (N-linked (GlcNAc...) asparagine). The helical transmembrane segment at 53–77 (YHLTSAWMILVVIASVFTNGLVLVA) threads the bilayer. Residues 78–89 (TMRFKKLRHPLN) lie on the Cytoplasmic side of the membrane. The chain crosses the membrane as a helical span at residues 90 to 115 (WILVNLAVADLAETVIASTISVVNQF). Residues 116–129 (YGYFVLGHPLCVVE) lie on the Extracellular side of the membrane. A disulfide bridge links Cys126 with Cys203. Residues 130–149 (GYTVSLCGITGLWSLAIISW) traverse the membrane as a helical segment. The Cytoplasmic portion of the chain corresponds to 150–168 (ERWLVVCKPFGNVRFDAKL). The helical transmembrane segment at 169 to 192 (AIAGIAFSWIWAAVWTAPPIFGWS) threads the bilayer. Residues 193–218 (RYWPYGLKTSCGPDVFSGTSYPGVQS) lie on the Extracellular side of the membrane. The chain crosses the membrane as a helical span at residues 219-246 (YMMVLMVTCCIIPLSVIVLCYLQVWMAI). Residues 247–268 (RTVAKQQKESESTQKAEKEVTR) lie on the Cytoplasmic side of the membrane. The chain crosses the membrane as a helical span at residues 269–292 (MVVVMVFAYCLCWGPYTFFACFAT). The Extracellular portion of the chain corresponds to 293–300 (AHPGYSFH). Residues 301–325 (PLVAAIPSYFAKSATIYNPIIYVFM) traverse the membrane as a helical segment. Lys312 is subject to N6-(retinylidene)lysine. Topologically, residues 326–364 (NRQFRNCILQLFGKKVEDSSELSSASRTEASSVSSVSPA) are cytoplasmic.

It belongs to the G-protein coupled receptor 1 family. Opsin subfamily. As to quaternary structure, monomer. Homodimer. Homotetramer. Post-translationally, O-glycosylated. In terms of processing, phosphorylated on some or all of the serine and threonine residues present in the C-terminal region. As to expression, expressed in cone photoreceptor cells.

It is found in the membrane. Functionally, visual pigments are the light-absorbing molecules that mediate vision. They consist of an apoprotein, opsin, covalently linked to cis-retinal. May increase spectral sensitivity in dim light. The protein is Medium-wave-sensitive opsin 1 (OPN1MW) of Oryctolagus cuniculus (Rabbit).